The primary structure comprises 328 residues: UPF0104 membrane protein AF_2231 (328 aa).

Helical transmembrane passes span 31–51 (NWLL…LWAL), 116–136 (ILDS…TGFS), 139–159 (FGFK…YILY), 221–241 (LVTL…LVAL), 245–265 (AYFL…LVPL), and 277–297 (MAYL…VGLW).

The protein belongs to the UPF0104 family.

Its subcellular location is the cell membrane. This chain is UPF0104 membrane protein AF_2231, found in Archaeoglobus fulgidus (strain ATCC 49558 / DSM 4304 / JCM 9628 / NBRC 100126 / VC-16).